Reading from the N-terminus, the 857-residue chain is Dynein regulatory complex protein 11 (857 aa).

The IQ domain occupies 206-235 (TKLAALQIQKVWRGFHQCKKTVKEREEEMV). The tract at residues 348–388 (EEKLKKKKKKEDKENKGKKGKKEKKEKKEKKVSLKEKAMKD) is disordered. The span at 365 to 375 (KKGKKEKKEKK) shows a compositional bias: basic residues. Over residues 376–387 (EKKVSLKEKAMK) the composition is skewed to basic and acidic residues. Residue 598 to 605 (GPSGVGKK) participates in ATP binding. The interval 834–857 (SLTVGNKEKEKDKGKKGKRGKKKK) is disordered. A compositionally biased stretch (basic residues) spans 847-857 (GKKGKRGKKKK).

Belongs to the AAA ATPase family. DRC11 subfamily. In terms of assembly, component of the nexin-dynein regulatory complex (N-DRC).

The protein localises to the cytoplasm. It localises to the cytoskeleton. It is found in the flagellum axoneme. In terms of biological role, component of the nexin-dynein regulatory complex (N-DRC), a key regulator of ciliary/flagellar motility which maintains the alignment and integrity of the distal axoneme and regulates microtubule sliding in motile axonemes. This is Dynein regulatory complex protein 11 (Iqca1) from Mus musculus (Mouse).